Here is a 274-residue protein sequence, read N- to C-terminus: Sulfur carrier protein FdhD (274 aa).

The active-site Cysteine persulfide intermediate is C121. 258 to 263 (FSKPGR) contributes to the Mo-bis(molybdopterin guanine dinucleotide) binding site.

It belongs to the FdhD family.

It localises to the cytoplasm. Its function is as follows. Required for formate dehydrogenase (FDH) activity. Acts as a sulfur carrier protein that transfers sulfur from IscS to the molybdenum cofactor prior to its insertion into FDH. In Yersinia pseudotuberculosis serotype IB (strain PB1/+), this protein is Sulfur carrier protein FdhD.